A 69-amino-acid chain; its full sequence is Probable Sec-independent protein translocase protein TatE (69 aa).

A helical membrane pass occupies residues 1 to 21 (MEGISIAKLLVIGALIVLLFG). Residues 45 to 69 (DDQPAAKSSAQDEHPAAISETRPKE) form a disordered region. Positions 54 to 69 (AQDEHPAAISETRPKE) are enriched in basic and acidic residues.

The protein belongs to the TatA/E family. TatE subfamily.

Its subcellular location is the cell inner membrane. Its function is as follows. Part of the twin-arginine translocation (Tat) system that transports large folded proteins containing a characteristic twin-arginine motif in their signal peptide across membranes. TatE shares overlapping functions with TatA. The chain is Probable Sec-independent protein translocase protein TatE from Dickeya chrysanthemi (strain Ech1591) (Dickeya zeae (strain Ech1591)).